A 388-amino-acid chain; its full sequence is N-acetylneuraminate epimerase (388 aa).

A signal peptide spans 1–26; the sequence is MFSLIRAKRLAIGIAALAWSTGAVMA. Kelch repeat units follow at residues 48 to 92, 94 to 147, 149 to 186, 187 to 232, 236 to 285, 307 to 356, and 358 to 387; these read MAYV…AAAG, KIFA…VGLA, GRIAIFGGYNKELFDKYLADVGAIDKDKEPEAYRKLVD, SYMG…ATMG, FLLV…VAGA, ANAA…DAPG, and LLVVGGEDRDGKARKEVFLLKWDGKALSVE. Residue Glu-242 is the Proton acceptor of the active site.

The protein belongs to the NanM family. As to quaternary structure, homodimer.

It localises to the periplasm. It carries out the reaction N-acetyl-alpha-neuraminate = N-acetyl-beta-neuraminate. Its function is as follows. Converts alpha-N-acetylneuranimic acid (Neu5Ac) to the beta-anomer, accelerating the equilibrium between the alpha- and beta-anomers. Probably facilitates sialidase-negative bacteria to compete successfully for limited amounts of extracellular Neu5Ac, which is likely taken up in the beta-anomer. In addition, the rapid removal of sialic acid from solution might be advantageous to the bacterium to damp down host responses. This Brucella melitensis biotype 1 (strain ATCC 23456 / CCUG 17765 / NCTC 10094 / 16M) protein is N-acetylneuraminate epimerase.